A 327-amino-acid chain; its full sequence is Probable NAD(P)H-dependent D-xylose reductase xyl1 (327 aa).

Catalysis depends on Tyr-57, which acts as the Proton donor. Residue His-119 participates in substrate binding. NAD(+) contacts are provided by residues 173-174 (SN), 222-231 (SSLGPQSFIE), and 278-288 (KSNNPDRLAQN).

The protein belongs to the aldo/keto reductase family.

It carries out the reaction xylitol + NAD(+) = D-xylose + NADH + H(+). The catalysed reaction is xylitol + NADP(+) = D-xylose + NADPH + H(+). It participates in carbohydrate metabolism; D-xylose degradation. Catalyzes the initial reaction in the xylose utilization pathway by reducing D-xylose into xylitol. Xylose is a major component of hemicelluloses such as xylan. Most fungi utilize D-xylose via three enzymatic reactions, xylose reductase (XR), xylitol dehydrogenase (XDH), and xylulokinase, to form xylulose 5-phosphate, which enters pentose phosphate pathway. The sequence is that of Probable NAD(P)H-dependent D-xylose reductase xyl1 (xyl1) from Arthroderma otae (strain ATCC MYA-4605 / CBS 113480) (Microsporum canis).